Consider the following 274-residue polypeptide: 3-methyl-2-oxobutanoate hydroxymethyltransferase (274 aa).

Residues aspartate 49 and aspartate 88 each coordinate Mg(2+). 3-methyl-2-oxobutanoate is bound by residues 49–50 (DS), aspartate 88, and lysine 118. Mg(2+) is bound at residue glutamate 120. Residue glutamate 187 is the Proton acceptor of the active site.

Belongs to the PanB family. In terms of assembly, homodecamer; pentamer of dimers. It depends on Mg(2+) as a cofactor.

The protein localises to the cytoplasm. It catalyses the reaction 3-methyl-2-oxobutanoate + (6R)-5,10-methylene-5,6,7,8-tetrahydrofolate + H2O = 2-dehydropantoate + (6S)-5,6,7,8-tetrahydrofolate. It participates in cofactor biosynthesis; (R)-pantothenate biosynthesis; (R)-pantoate from 3-methyl-2-oxobutanoate: step 1/2. Functionally, catalyzes the reversible reaction in which hydroxymethyl group from 5,10-methylenetetrahydrofolate is transferred onto alpha-ketoisovalerate to form ketopantoate. The chain is 3-methyl-2-oxobutanoate hydroxymethyltransferase from Allorhizobium ampelinum (strain ATCC BAA-846 / DSM 112012 / S4) (Agrobacterium vitis (strain S4)).